Consider the following 91-residue polypeptide: Potassium channel toxin MeuTXK-beta-2 (91 aa).

The first 19 residues, 1-19 (MQRNLVVLLFLGMVALSSC), serve as a signal peptide directing secretion. A BetaSPN-type CS-alpha/beta domain is found at 54–91 (QFGCSAYQGYCDDHCQDIEKKEGFCHGFKCKCGIPMGF). 3 cysteine pairs are disulfide-bonded: Cys-57–Cys-78, Cys-64–Cys-83, and Cys-68–Cys-85.

Belongs to the long chain scorpion toxin family. Class 1 subfamily. In terms of tissue distribution, expressed by the venom gland.

The protein resides in the secreted. In terms of biological role, has a low affinity binding to potassium channels of rat brain synaptosomes. Displays weak antibacterial activity against Stenotrophomonas sp. Strongly inhibits the development of the Plasmodium berghei ookinetes. Displays slight hemolytic effect on mouse erythrocytes. Induces cytolysis on Xenopus oocytes at high concentrations. Is not toxic towards mice and towards the insect Tenebrio molitor. This chain is Potassium channel toxin MeuTXK-beta-2, found in Mesobuthus eupeus (Lesser Asian scorpion).